Consider the following 377-residue polypeptide: Apelin receptor (377 aa).

The Extracellular portion of the chain corresponds to 1-28 (MEDDGYNYYGADNQSECDYADWKPSGAL). N13 carries an N-linked (GlcNAc...) asparagine glycan. Cystine bridges form between C17-C279 and C100-C179. The helical transmembrane segment at 29 to 52 (IPAIYMLVFLLGTTGNGLVLWTVF) threads the bilayer. Residues 53 to 62 (RTSREKRRSA) are Cytoplasmic-facing. A helical membrane pass occupies residues 63–84 (DIFIASLAVADLTFVVTLPLWA). At 85 to 97 (TYTYREFDWPFGT) the chain is on the extracellular side. The helical transmembrane segment at 98-123 (FSCKLSSYLIFVNMYASVFCLTGLSF) threads the bilayer. Residues 124-144 (DRYLAIVRPVANARLRLRVSG) lie on the Cytoplasmic side of the membrane. Residues 145-162 (AVATAVLWVLAALLAVPV) traverse the membrane as a helical segment. Over 163–196 (MVFRSTDASENGTKIQCYMDYSMVATSNSEWAWE) the chain is Extracellular. N-linked (GlcNAc...) asparagine glycosylation is present at N173. Residues 197–221 (VGLGVSSTAVGFVVPFTIMLTCYFF) form a helical membrane-spanning segment. The Cytoplasmic portion of the chain corresponds to 222-244 (IAQTIAGHFRKERIEGLRKRRRL). The helical transmembrane segment at 245–268 (LSIIVVLVVTFALCWMPYHLVKTL) threads the bilayer. Topologically, residues 269-287 (YMLGSLLHWPCDFDIFLMN) are extracellular. Residues 288–310 (VFPYCTCISYVNSCLNPFLYAFF) form a helical membrane-spanning segment. The Cytoplasmic portion of the chain corresponds to 311-377 (DPRFRQACTS…IPYSQETLVD (67 aa)). Residues 334-377 (HSSSAEKSASYSSGHSQGPGPNMGKGGEQMHEKSIPYSQETLVD) are disordered. The span at 335-349 (SSSAEKSASYSSGHS) shows a compositional bias: low complexity.

This sequence belongs to the G-protein coupled receptor 1 family. Homodimer; dimerization inhibits APLNR-mediated G protein and beta-arrestin signaling pathways compared to monomeric APLNR. In terms of tissue distribution, expressed in coronary endothelial cells (at protein level). Expressed in the embryo, allantoic and endothelial precursor cells of the yolk sac at 8 days post-coitum (dpc). Expressed in the secondary heart field and somite at 8.25 dpc. Expressed in fetal allantoic endothelial cells at 9 dpc. Expressed in the allantoid and the invading fetal vasculature of the placenta at 9.5 dpc. Expressed in endothelial cells adjacent to syncytiotrophoblast cells at 10.5 dpc. Expressed weakly in the embryonic heart at 11.5 dpc. Expressed in the adult heart. Expressed in endothelial cells and cardiomyocytes and weakly expressed in fibroblasts.

The protein localises to the cell membrane. In terms of biological role, g protein-coupled receptor for peptide hormones apelin (APLN) and apelin receptor early endogenous ligand (APELA), that plays a role in the regulation of normal cardiovascular function and fluid homeostasis. When acting as apelin receptor, activates both G(i) protein pathway that inhibits adenylate cyclase activity, and the beta-arrestin pathway leading to internalization of the receptor. APLNR/APJ receptor is also activated by mechanical strech in a G-protein-independent fashion to induce beta-arrestin signaling leading to cardiac hypertrophy. However, the presence of apelin ligand blunts cardiac hypertrophic induction from APLNR/APJ on response to pathological stimuli. Plays a key role in early development such as gastrulation, blood vessels formation and heart morphogenesis by acting as a receptor for APELA hormone. May promote angioblast migration toward the embryonic midline, i.e. the position of the future vessel formation, during vasculogenesis. Promotes sinus venosus (SV)-derived endothelial cells migration into the developing heart to promote coronary blood vessel development. Also plays a role in various processes in adults such as regulation of blood vessel formation, blood pressure and heart contractility and protection from cardiac hypertrophy and heart failure. This is Apelin receptor from Mus musculus (Mouse).